Here is a 461-residue protein sequence, read N- to C-terminus: Ornithine decarboxylase (461 aa).

Lysine 69 is subject to N6-(pyridoxal phosphate)lysine. Pyridoxal 5'-phosphate contacts are provided by residues serine 200, glycine 237, and 274 to 277; that span reads EPGR. At serine 303 the chain carries Phosphoserine; by CK2. 331–332 serves as a coordination point for substrate; sequence YD. Cysteine 360 functions as the Proton donor; shared with dimeric partner in the catalytic mechanism. S-nitrosocysteine is present on cysteine 360. Residue aspartate 361 coordinates substrate. Tyrosine 389 is a binding site for pyridoxal 5'-phosphate.

This sequence belongs to the Orn/Lys/Arg decarboxylase class-II family. Homodimer. Only the dimer is catalytically active, as the active sites are constructed of residues from both monomers. Pyridoxal 5'-phosphate serves as cofactor.

The catalysed reaction is L-ornithine + H(+) = putrescine + CO2. It participates in amine and polyamine biosynthesis; putrescine biosynthesis via L-ornithine pathway; putrescine from L-ornithine: step 1/1. Inhibited by antizymes (AZs) OAZ1, OAZ2 and OAZ3 in response to polyamine levels. AZs inhibit the assembly of the functional homodimer by binding to ODC monomers. Additionally, OAZ1 targets ODC monomers for ubiquitin-independent proteolytic destruction by the 26S proteasome. Catalyzes the first and rate-limiting step of polyamine biosynthesis that converts ornithine into putrescine, which is the precursor for the polyamines, spermidine and spermine. Polyamines are essential for cell proliferation and are implicated in cellular processes, ranging from DNA replication to apoptosis. The sequence is that of Ornithine decarboxylase (ODC1) from Bos taurus (Bovine).